A 180-amino-acid polypeptide reads, in one-letter code: Adenine phosphoribosyltransferase (180 aa).

This sequence belongs to the purine/pyrimidine phosphoribosyltransferase family. Homodimer.

Its subcellular location is the cytoplasm. It catalyses the reaction AMP + diphosphate = 5-phospho-alpha-D-ribose 1-diphosphate + adenine. It participates in purine metabolism; AMP biosynthesis via salvage pathway; AMP from adenine: step 1/1. In terms of biological role, catalyzes a salvage reaction resulting in the formation of AMP, that is energically less costly than de novo synthesis. This chain is Adenine phosphoribosyltransferase, found in Rhizobium meliloti (strain 1021) (Ensifer meliloti).